The following is a 160-amino-acid chain: Nucleotide-binding protein CPS_1098 (160 aa).

Belongs to the YajQ family.

Its function is as follows. Nucleotide-binding protein. The protein is Nucleotide-binding protein CPS_1098 of Colwellia psychrerythraea (strain 34H / ATCC BAA-681) (Vibrio psychroerythus).